A 228-amino-acid chain; its full sequence is DNA repair protein RecO (228 aa).

This sequence belongs to the RecO family.

Involved in DNA repair and RecF pathway recombination. This chain is DNA repair protein RecO, found in Mannheimia succiniciproducens (strain KCTC 0769BP / MBEL55E).